Here is a 1179-residue protein sequence, read N- to C-terminus: ATP-dependent helicase/deoxyribonuclease subunit B (1179 aa).

It belongs to the helicase family. AddB/RexB type 2 subfamily. Heterodimer of AddA and RexB. Mg(2+) is required as a cofactor.

Functionally, the heterodimer acts as both an ATP-dependent DNA helicase and an ATP-dependent, dual-direction single-stranded exonuclease. Recognizes the chi site generating a DNA molecule suitable for the initiation of homologous recombination. This subunit has 5' -&gt; 3' nuclease activity but not helicase activity. The protein is ATP-dependent helicase/deoxyribonuclease subunit B of Lacticaseibacillus casei (strain BL23) (Lactobacillus casei).